We begin with the raw amino-acid sequence, 624 residues long: Chaperone protein HtpG (624 aa).

The tract at residues 1-336 (MKGQETRGFQ…SSDLPLNVSR (336 aa)) is a; substrate-binding. The b stretch occupies residues 337 to 552 (EILQDSTVTR…ADEMSTQMAK (216 aa)). A c region spans residues 553-624 (LFAAAGQKVP…IRRMNQLLVS (72 aa)).

The protein belongs to the heat shock protein 90 family. Homodimer.

It is found in the cytoplasm. In terms of biological role, molecular chaperone. Has ATPase activity. The protein is Chaperone protein HtpG of Shigella boydii serotype 4 (strain Sb227).